The chain runs to 94 residues: Small ribosomal subunit protein bS6 (94 aa).

It belongs to the bacterial ribosomal protein bS6 family.

Its function is as follows. Binds together with bS18 to 16S ribosomal RNA. The polypeptide is Small ribosomal subunit protein bS6 (Fusobacterium nucleatum subsp. nucleatum (strain ATCC 25586 / DSM 15643 / BCRC 10681 / CIP 101130 / JCM 8532 / KCTC 2640 / LMG 13131 / VPI 4355)).